A 728-amino-acid chain; its full sequence is Catalase-peroxidase 1 (728 aa).

Positions 1 to 22 are cleaved as a signal peptide; it reads MDKTQSSQGKCPVMHGANSAVA. The tryptophyl-tyrosyl-methioninium (Trp-Tyr) (with M-251) cross-link spans 97-225; sequence WHSAGTYRVA…LAAVMMGLIY (129 aa). Histidine 98 acts as the Proton acceptor in catalysis. Positions 225–251 form a cross-link, tryptophyl-tyrosyl-methioninium (Tyr-Met) (with W-97); the sequence is YVNPEGVDGKPDPLRTAQDVRVTFARM. Residue histidine 266 participates in heme b binding.

This sequence belongs to the peroxidase family. Peroxidase/catalase subfamily. Homodimer or homotetramer. The cofactor is heme b. In terms of processing, formation of the three residue Trp-Tyr-Met cross-link is important for the catalase, but not the peroxidase activity of the enzyme.

It carries out the reaction H2O2 + AH2 = A + 2 H2O. The catalysed reaction is 2 H2O2 = O2 + 2 H2O. In terms of biological role, bifunctional enzyme with both catalase and broad-spectrum peroxidase activity. In Shewanella sp. (strain MR-4), this protein is Catalase-peroxidase 1.